Reading from the N-terminus, the 516-residue chain is Solute carrier family 49 member A3 (516 aa).

A compositionally biased stretch (basic and acidic residues) spans M1–D10. A disordered region spans residues M1–D22. A run of 12 helical transmembrane segments spans residues W34–F54, W74–L94, I104–V124, L139–F159, I170–V190, M199–W219, V253–L273, L289–V309, I321–G341, L344–V364, G382–L402, and V425–F445. Positions E453 to V516 are disordered. Over residues G504–V516 the composition is skewed to basic and acidic residues.

Belongs to the major facilitator superfamily.

It localises to the membrane. This is Solute carrier family 49 member A3 (Slc49a3) from Mus musculus (Mouse).